Reading from the N-terminus, the 780-residue chain is Dynamin-related protein 3B (780 aa).

S2 carries the N-acetylserine modification. Residues T40–P315 form the Dynamin-type G domain. The interval G50–S57 is G1 motif. Residue G50–S57 coordinates GTP. The tract at residues C76–R78 is G2 motif. Residues D157 to G160 are G3 motif. GTP contacts are provided by residues D157 to I161 and T226 to D229. The G4 motif stretch occupies residues T226 to D229. The tract at residues V256–S259 is G5 motif. 2 disordered regions span residues P536–T558 and Q573–W592. Positions R539–R548 are enriched in basic and acidic residues. The segment covering T549 to T558 has biased composition (polar residues). The GED domain maps to I654–E745. Residues I753–T770 show a composition bias toward basic and acidic residues. The segment at I753–M780 is disordered. The span at E771–M780 shows a compositional bias: polar residues.

It belongs to the TRAFAC class dynamin-like GTPase superfamily. Dynamin/Fzo/YdjA family. As to quaternary structure, interacts with ARC5 on peroxisomes and ELM1 on mitochondria.

It localises to the mitochondrion. The protein resides in the peroxisome. Functionally, involved in the control of mitochondrial and peroxisomal division and morphology. This is Dynamin-related protein 3B (DRP3B) from Arabidopsis thaliana (Mouse-ear cress).